The primary structure comprises 562 residues: Teichoic acid ribitol-phosphate polymerase TarL (562 aa).

The protein belongs to the CDP-glycerol glycerophosphotransferase family.

The protein localises to the cell membrane. It catalyses the reaction 4-O-[di(2R)-glycerylphospho]-N-acetyl-beta-D-mannosaminyl-(1-&gt;4)-N-acetyl-alpha-D-glucosaminyl di-trans,octa-cis-undecaprenyl diphosphate + n CDP-L-ribitol = 4-O-[(D-ribitylphospho)(n)-di{(2R)-glycerylphospho}]-N-acetyl-beta-D-mannosaminyl-(1-&gt;4)-N-acetyl-alpha-D-glucosaminyl di-trans,octa-cis-undecaprenyl diphosphate + n CMP + n H(+). Its pathway is cell wall biogenesis; poly(ribitol phosphate) teichoic acid biosynthesis. In terms of biological role, responsible for the polymerization of the main chain of the major teichoic acid by sequential transfer of ribitol phosphate units from CDP-ribitol to the second glycerol phosphate attached to the disaccharide linkage unit. Synthesizes polymers of more than 40 ribitol phosphate units in length. The sequence is that of Teichoic acid ribitol-phosphate polymerase TarL (tarL) from Staphylococcus aureus (strain NCTC 8325 / PS 47).